The sequence spans 253 residues: MTNETPFSKNAEMYRDEKVFAEGEDLGLMIKTAECRAEHRVLDIGAGAGHTALAFSPYVQECIGVDATKEMVEVASSFAQEKGVENVRFQQGTAESLPFPDDSFDIITCRYAAHHFSDVRKAVREVARVLKQDGRFLLVDHYAPEDPVLDEFVNHLNRLRDPSHVRESSLSEWQAMFSANQLAYQDIQKWNLPIQYDSWIKRGGTPADREKQIITHLNHASDEARDTFCITLNQNGQPISFCLKAILIQGIKR.

S-adenosyl-L-methionine is bound by residues Gly-45, 66-67 (DA), 94-95 (AE), and Arg-110.

This sequence belongs to the methyltransferase superfamily.

This is an uncharacterized protein from Bacillus subtilis (strain 168).